Here is a 148-residue protein sequence, read N- to C-terminus: Large ribosomal subunit protein uL15 (148 aa).

Basic residues predominate over residues Met-1–Gly-30. A disordered region spans residues Met-1–Gly-37. Residue His-39 is modified to (3S)-3-hydroxyhistidine. Lys-47 and Lys-55 each carry N6-acetyllysine. The residue at position 68 (Ser-68) is a Phosphoserine. Lys-110 carries the N6-acetyllysine modification.

This sequence belongs to the universal ribosomal protein uL15 family. In terms of assembly, component of the large ribosomal subunit. Hydroxylated on His-39 by MINA.

Its subcellular location is the cytoplasm. Component of the large ribosomal subunit. The ribosome is a large ribonucleoprotein complex responsible for the synthesis of proteins in the cell. In Rattus norvegicus (Rat), this protein is Large ribosomal subunit protein uL15 (Rpl27a).